The following is a 723-amino-acid chain: MDATSKPAGKCPVMHGGNTASGKSVTEWWPNALNLDILHQHDTKTNPLGTSFNYREALKTLDVEALKADLRALMTDSQEWWPADWGSYVGMMARVTWHAAGSYRVTDGRGGANTGNQRFAPLNSWPDNVNTDKGRRLLWPIKKKYGNKISWADLIALAGTIAYDVAGLKTFGFAFGREDIWAPEKDTYWGDEKEWLAPSDGRYGDVSKPETLENPLAAVQMGLIYVNPEGVNGKSDPLATAAQMRETFARMGMDDEETVALTAGGHTIGKSHGNGSAANLSPDPEAAGPEYQGLGWINTKGRGIGRDTVVSGIEGAWTSEPTKWDNGFFDMLFKHEWTLTHSPAGASQWAPITIAEEDKPVDVEDASIRTIPMMTDADMALKVDPIYREISLKFKDDQDHFSDVFARAWFKLTHRDMGPKSRYVGPDVPAEDLIWQDPIPAGSTSYDVAAVKAKIAASGLSVADLVSTAWDSARTFRGSDKRGGANGARIRLAPQKDWEGNEPARLSRVLSVLEPIARETGASIADVIVLAGNYGVEQAAKAAGFDIAVPFAAGRGDASAEQTDADSFAPLEPLADGFRNWVKKDYVVSPEELLLDRAQLLGLTAPELTVLIGGLRVIGANYGGAAHGVFTDKPGALTTDFFTTLTDMAYSWVPTGNNLYEIRDRKTGAARYSATRVDLVIGSNSILRAYAEVYAQDDNREKFARDFIAAWTKVMNADRFDLI.

The tryptophyl-tyrosyl-methioninium (Trp-Tyr) (with M-251) cross-link spans 97-225; sequence WHAAGSYRVT…LAAVQMGLIY (129 aa). Histidine 98 (proton acceptor) is an active-site residue. The tryptophyl-tyrosyl-methioninium (Tyr-Met) (with W-97) cross-link spans 225–251; that stretch reads YVNPEGVNGKSDPLATAAQMRETFARM. Heme b is bound at residue histidine 266.

This sequence belongs to the peroxidase family. Peroxidase/catalase subfamily. In terms of assembly, homodimer or homotetramer. Requires heme b as cofactor. In terms of processing, formation of the three residue Trp-Tyr-Met cross-link is important for the catalase, but not the peroxidase activity of the enzyme.

It carries out the reaction H2O2 + AH2 = A + 2 H2O. The enzyme catalyses 2 H2O2 = O2 + 2 H2O. In terms of biological role, bifunctional enzyme with both catalase and broad-spectrum peroxidase activity. The protein is Catalase-peroxidase of Agrobacterium fabrum (strain C58 / ATCC 33970) (Agrobacterium tumefaciens (strain C58)).